The following is a 699-amino-acid chain: Tectonic-like complex member Mks1 (699 aa).

Disordered regions lie at residues 101 to 121 (RRSPISQHEGEMEKDKNEGEI) and 373 to 396 (DGFSEEADGEDEQELGDGLPIEED). Over residues 108-119 (HEGEMEKDKNEG) the composition is skewed to basic and acidic residues. In terms of domain architecture, C2 B9-type spans 434–560 (KRVSLLLELQ…RLQCIRPLGN (127 aa)). Residues 632 to 661 (LELGNDSSDDGDSNDDDVRSSSNPDTSRAT) are disordered.

In terms of assembly, probable component of the tectonic-like complex (also named MKS complex), composed of B9d1, B9d2, Cc2d2a, Mks1 and tctn. Expressed in chordotonal neurons in the antennae (at protein level). Expressed in spermatids (at protein level).

It is found in the cytoplasm. The protein localises to the cytoskeleton. The protein resides in the cilium basal body. Its subcellular location is the microtubule organizing center. It localises to the centrosome. It is found in the centriole. Probable component of the tectonic-like complex (also named MKS complex), a complex localized at the transition zone of primary cilia. Required for ciliary structure and function. The polypeptide is Tectonic-like complex member Mks1 (Drosophila melanogaster (Fruit fly)).